The sequence spans 800 residues: MNTNSELSLENLNAAGDAAARAIPPLWPLASSVAVNPYLGQTAETLALAGARLGRVGGVPVTMPRAWYAARIADGTITDADLSAALAVNPTAAADLEALKAHAEQPESAQKPLPTLADLAADASGIDWPGILADRIGLWAAGYFDQGQALWAAPHRRGAYDAWRQYATHDLTPEIAGLSGFAQFVSETPDTADQASTRAANRLGLSDAALETYLHQLLFTLGGWAQVARYRLWQAELAGKSDATITDMLTIRLLWEEALFAQYEEEIGAEWEKVVAAHAAPVASDADLQVNAVLQEAWERAGQRDLAETFSMPAPKADDTRPALQAAFCIDVRSEVFRRALESLTPDIKTLGFAGFFGLTPAHKGFASDVDELRLPVLLNPGLTSTSQGDDAEADQTARFKARASRAWGRFKLAAVSSFAFVEATGPIYAGKLVRDALNMAPNDVPGGPMPRLDPSVDLAAQTDAAETILRAMSFTDNFARLVVLAGHGANVVNNPFASGLHCGACGGYSGEVNARLLAGLLNNVDVRRGLVERGITIPDDTIFVGALHDTTTDAMTLYEADHPSKAHAADLKQAKAWFLSAGSVTRAERALRLPRAEGTDDINLRSRDWAETRPEWALAGCKAFVAAPRQRTAGRSLEGRAFLHDYDWQQDKGFGVLELIMTAPVVVASWISLQYYGSTVSPDVFGSGNKLLHNVTGGIGVVEGNGGTLRTGLPWQSVHEGEDFAHEPLRLSVCIEAPREAMSDILKRHDGVRALFDNRWLHLFALDENGQMAWRYEGDLEWSQMPVASEAIPETEVAA.

Zn(2+) is bound by residues C329, D331, H488, and C503.

Belongs to the inorganic carbon transporter (TC 9.A.2) DabA family. As to quaternary structure, forms a complex with DabB. Zn(2+) is required as a cofactor.

The protein localises to the cell inner membrane. Part of an energy-coupled inorganic carbon pump. The chain is Probable inorganic carbon transporter subunit DabA from Roseobacter denitrificans (strain ATCC 33942 / OCh 114) (Erythrobacter sp. (strain OCh 114)).